Reading from the N-terminus, the 207-residue chain is Putative acetyltransferase C18B11.09c (207 aa).

This sequence belongs to the transferase hexapeptide repeat family.

The chain is Putative acetyltransferase C18B11.09c from Schizosaccharomyces pombe (strain 972 / ATCC 24843) (Fission yeast).